Here is a 361-residue protein sequence, read N- to C-terminus: Histidinol-phosphate aminotransferase (361 aa).

Lysine 224 is subject to N6-(pyridoxal phosphate)lysine.

The protein belongs to the class-II pyridoxal-phosphate-dependent aminotransferase family. Histidinol-phosphate aminotransferase subfamily. In terms of assembly, homodimer. Requires pyridoxal 5'-phosphate as cofactor.

The catalysed reaction is L-histidinol phosphate + 2-oxoglutarate = 3-(imidazol-4-yl)-2-oxopropyl phosphate + L-glutamate. It participates in amino-acid biosynthesis; L-histidine biosynthesis; L-histidine from 5-phospho-alpha-D-ribose 1-diphosphate: step 7/9. The polypeptide is Histidinol-phosphate aminotransferase (Bacillus licheniformis (strain ATCC 14580 / DSM 13 / JCM 2505 / CCUG 7422 / NBRC 12200 / NCIMB 9375 / NCTC 10341 / NRRL NRS-1264 / Gibson 46)).